The chain runs to 371 residues: MANYSHAGDHNILQNVSPLATFLKLTSLGFIIGVGVVGNLLISILLVKDKSLHRAPYYFLLDLCASDILRSAICFPFVFTSVKNGSAWTYGTLTCKVIAFLGVLSCFHTAFMLFCVSVTRYLAIAHHRFYTKRLTFWTCLAVICMVWTLSVAMAFPPVLDVGTYSFIREEDQCTFQHRSFRANDSLGFMLLLALILLATQLVYLKLIFFVHDRRKMKPVQFVPAVSQNWTFHGPGASGQAAANWLAGFGRGPTPPTLLGIRQNSNAAGRRRLLVLDEFKTEKRISRMFYIITFFFLSLWGPYLVACYWRVFARGPVIPGGYLTAAVWMSFAQAGVNPFICIFSNRELRRCFSTTLLYCRKSRLPREPYCVI.

Residues 1 to 26 (MANYSHAGDHNILQNVSPLATFLKLT) lie on the Extracellular side of the membrane. A glycan (N-linked (GlcNAc...) asparagine) is linked at N3. Residues 27–47 (SLGFIIGVGVVGNLLISILLV) traverse the membrane as a helical segment. Over 48-58 (KDKSLHRAPYY) the chain is Cytoplasmic. Residues 59–79 (FLLDLCASDILRSAICFPFVF) form a helical membrane-spanning segment. Over 80–96 (TSVKNGSAWTYGTLTCK) the chain is Extracellular. The N-linked (GlcNAc...) asparagine glycan is linked to N84. Residues C95 and C173 are joined by a disulfide bond. Residues 97–117 (VIAFLGVLSCFHTAFMLFCVS) traverse the membrane as a helical segment. Topologically, residues 118-138 (VTRYLAIAHHRFYTKRLTFWT) are cytoplasmic. A helical transmembrane segment spans residues 139–159 (CLAVICMVWTLSVAMAFPPVL). The Extracellular portion of the chain corresponds to 160 to 189 (DVGTYSFIREEDQCTFQHRSFRANDSLGFM). N183 carries N-linked (GlcNAc...) asparagine glycosylation. A helical membrane pass occupies residues 190–210 (LLLALILLATQLVYLKLIFFV). The Cytoplasmic segment spans residues 211–287 (HDRRKMKPVQ…FKTEKRISRM (77 aa)). The chain crosses the membrane as a helical span at residues 288–308 (FYIITFFFLSLWGPYLVACYW). The Extracellular segment spans residues 309 to 321 (RVFARGPVIPGGY). A helical membrane pass occupies residues 322 to 342 (LTAAVWMSFAQAGVNPFICIF). The Cytoplasmic portion of the chain corresponds to 343–371 (SNRELRRCFSTTLLYCRKSRLPREPYCVI).

Belongs to the G-protein coupled receptor 1 family.

It localises to the cell membrane. Orphan receptor. This is Probable G protein-coupled receptor 85 (gpr85) from Danio rerio (Zebrafish).